An 83-amino-acid polypeptide reads, in one-letter code: Small ribosomal subunit protein bS20 (83 aa).

It belongs to the bacterial ribosomal protein bS20 family.

Binds directly to 16S ribosomal RNA. This chain is Small ribosomal subunit protein bS20, found in Flavobacterium johnsoniae (strain ATCC 17061 / DSM 2064 / JCM 8514 / BCRC 14874 / CCUG 350202 / NBRC 14942 / NCIMB 11054 / UW101) (Cytophaga johnsonae).